The sequence spans 407 residues: Tyrosine--tRNA ligase (407 aa).

Position 35 (tyrosine 35) interacts with L-tyrosine. Residues 40–49 carry the 'HIGH' region motif; that stretch reads PTADSLHVGH. Tyrosine 168 and glutamine 172 together coordinate L-tyrosine. The 'KMSKS' region signature appears at 228–232; the sequence is KMGKT. Lysine 231 lines the ATP pocket. The region spanning 341-405 is the S4 RNA-binding domain; sequence NLLVDLLVKC…RGKKNFNRIV (65 aa).

This sequence belongs to the class-I aminoacyl-tRNA synthetase family. TyrS type 1 subfamily. As to quaternary structure, homodimer.

It localises to the cytoplasm. The enzyme catalyses tRNA(Tyr) + L-tyrosine + ATP = L-tyrosyl-tRNA(Tyr) + AMP + diphosphate + H(+). Catalyzes the attachment of tyrosine to tRNA(Tyr) in a two-step reaction: tyrosine is first activated by ATP to form Tyr-AMP and then transferred to the acceptor end of tRNA(Tyr). The chain is Tyrosine--tRNA ligase from Clostridium botulinum (strain Kyoto / Type A2).